Reading from the N-terminus, the 69-residue chain is DNA-directed RNA polymerase subunit epsilon (69 aa).

Belongs to the RNA polymerase subunit epsilon family. In terms of assembly, RNAP is composed of a core of 2 alpha, a beta and a beta' subunit. The core is associated with a delta subunit, and at least one of epsilon or omega. When a sigma factor is associated with the core the holoenzyme is formed, which can initiate transcription.

The enzyme catalyses RNA(n) + a ribonucleoside 5'-triphosphate = RNA(n+1) + diphosphate. In terms of biological role, a non-essential component of RNA polymerase (RNAP). This Lysinibacillus sphaericus (strain C3-41) protein is DNA-directed RNA polymerase subunit epsilon.